Reading from the N-terminus, the 318-residue chain is Ficolin-1-B (318 aa).

The signal sequence occupies residues 1-19; that stretch reads MTRWVQTFLLLVAVIRSYA. Residues 42-99 form the Collagen-like domain; the sequence is GCPGIPGVPGPQGPSGPAGAKGEKGFPGIPGKMGPTGLKGERGISGPKGQKGDKGDPG. Positions 100–318 constitute a Fibrinogen C-terminal domain; that stretch reads IPVVGMAQNC…VSEIKFRPQP (219 aa). An intrachain disulfide couples Cys109 to Cys137. Residues Asn205 and Asn222 are each glycosylated (N-linked (GlcNAc...) asparagine). Asp253 contacts Ca(2+). A glycan (N-linked (GlcNAc...) asparagine) is linked at Asn254. Residues Asp255 and Ser257 each coordinate Ca(2+). A disulfide bridge connects residues Cys261 and Cys274. Position 273 to 275 (273 to 275) interacts with a carbohydrate; sequence SCH. N-linked (GlcNAc...) asparagine glycosylation occurs at Asn287.

The protein belongs to the ficolin lectin family. As to quaternary structure, homotrimer. May form higher-order oligomers. Post-translationally, N-glycosylated. As to expression, expressed in peripheral blood leukocytes. Also detected at lower levels in spleen and lung.

It localises to the secreted. Functionally, may function in innate immunity through activation of the lectin complement pathway. Binds to GalNAc and GlcNAc carbohydrate moieties. The sequence is that of Ficolin-1-B from Xenopus laevis (African clawed frog).